Here is a 91-residue protein sequence, read N- to C-terminus: Phosphocarrier protein NPr (91 aa).

The HPr domain maps to 3 to 90 (KLERQVTICN…ALVDAKFDEA (88 aa)). The Pros-phosphohistidine intermediate role is filled by His17.

Belongs to the HPr family.

The protein localises to the cytoplasm. Component of the phosphoenolpyruvate-dependent nitrogen-metabolic phosphotransferase system (nitrogen-metabolic PTS), that seems to be involved in regulating nitrogen metabolism. The phosphoryl group from phosphoenolpyruvate (PEP) is transferred to the phosphoryl carrier protein NPr by enzyme I-Ntr. Phospho-NPr then transfers it to EIIA-Ntr. Could function in the transcriptional regulation of sigma-54 dependent operons in conjunction with the NPr (PtsO) and EIIA-Ntr (PtsN) proteins. This chain is Phosphocarrier protein NPr (ptsO), found in Shewanella violacea (strain JCM 10179 / CIP 106290 / LMG 19151 / DSS12).